Here is a 256-residue protein sequence, read N- to C-terminus: Protein YIPF5 (256 aa).

Over M1–D125 the chain is Cytoplasmic. A helical membrane pass occupies residues L126–I146. Q147 is a topological domain (lumenal). Residues F148–L168 form a helical membrane-spanning segment. Topologically, residues M169–T172 are cytoplasmic. A helical membrane pass occupies residues G173 to L193. Over S194–T195 the chain is Lumenal. Residues F196 to G216 traverse the membrane as a helical segment. Residues W217–Q235 are Cytoplasmic-facing. Residues Q236–F256 traverse the membrane as a helical segment.

It belongs to the YIP1 family.

It localises to the endoplasmic reticulum membrane. The protein localises to the golgi apparatus. It is found in the cis-Golgi network membrane. Functionally, plays a role in transport between endoplasmic reticulum and Golgi. This chain is Protein YIPF5 (yipf5), found in Xenopus laevis (African clawed frog).